An 825-amino-acid chain; its full sequence is Glycerol-3-phosphate acyltransferase 1, mitochondrial (825 aa).

Residues 1 to 87 (MDESALTLGT…FFNPSIPSLG (87 aa)) are Cytoplasmic-facing. An important for mitochondrial localization region spans residues 80 to 120 (NPSIPSLGLRNVIYINETHTRHRGWLARRLSYVLFIQERDV). Residues 88 to 118 (LRNVIYINETHTRHRGWLARRLSYVLFIQER) lie within the membrane without spanning it. At 119–825 (DVHKGMFATN…LEYILSLVVL (707 aa)) the chain is on the cytoplasmic side. An HXXXXD motif motif is present at residues 230–235 (HRSHID). The CoA site is built by R278, R279, K288, R293, and R328. The residue at position 380 (S380) is a Phosphoserine. Residues 435–455 (SRPSGAADEGTDMSINESRNA) are disordered. Residue R461 coordinates CoA. S685 and S692 each carry phosphoserine. 2 positions are modified to N6-acetyllysine: K777 and K781.

This sequence belongs to the GPAT/DAPAT family. In terms of tissue distribution, highly expressed in adipose tissues and lung. Low expression in liver.

The protein localises to the mitochondrion outer membrane. It carries out the reaction sn-glycerol 3-phosphate + an acyl-CoA = a 1-acyl-sn-glycero-3-phosphate + CoA. The catalysed reaction is (9Z,12Z)-octadecadienoyl-CoA + sn-glycerol 3-phosphate = 1-(9Z,12Z)-octadecadienoyl-sn-glycero-3-phosphate + CoA. It catalyses the reaction sn-glycerol 3-phosphate + (9Z)-octadecenoyl-CoA = 1-(9Z-octadecenoyl)-sn-glycero-3-phosphate + CoA. The enzyme catalyses sn-glycerol 3-phosphate + octadecanoyl-CoA = 1-octadecanoyl-sn-glycero-3-phosphate + CoA. It carries out the reaction sn-glycerol 3-phosphate + hexadecanoyl-CoA = 1-hexadecanoyl-sn-glycero-3-phosphate + CoA. The catalysed reaction is dodecanoyl-CoA + sn-glycerol 3-phosphate = 1-dodecanoyl-sn-glycerol 3-phosphate + CoA. It catalyses the reaction 1-acyl-sn-glycero-3-phospho-(1'-sn-glycerol) + an acyl-CoA = a 1,2-diacyl-sn-glycero-3-phospho-(1'-sn-glycerol) + CoA. It participates in phospholipid metabolism; CDP-diacylglycerol biosynthesis; CDP-diacylglycerol from sn-glycerol 3-phosphate: step 1/3. Functionally, mitochondrial membrane protein that catalyzes the essential first step of biosynthesis of glycerolipids such as triglycerides, phosphatidic acids and lysophosphatidic acids. Esterifies acyl-group from acyl-coenzyme A (acyl-CoA) to the sn-1 position of glycerol-3-phosphate, to produce lysophosphatidic acid. Has a narrow hydrophobic binding cleft that selects for a linear acyl chain. Catalytic activity is higher for substrates with a 16-carbon acyl chain. The chain is Glycerol-3-phosphate acyltransferase 1, mitochondrial from Bos taurus (Bovine).